The primary structure comprises 122 residues: Large ribosomal subunit protein uL14 (122 aa).

Belongs to the universal ribosomal protein uL14 family. Part of the 50S ribosomal subunit. Forms a cluster with proteins L3 and L19. In the 70S ribosome, L14 and L19 interact and together make contacts with the 16S rRNA in bridges B5 and B8.

Binds to 23S rRNA. Forms part of two intersubunit bridges in the 70S ribosome. In Cupriavidus taiwanensis (strain DSM 17343 / BCRC 17206 / CCUG 44338 / CIP 107171 / LMG 19424 / R1) (Ralstonia taiwanensis (strain LMG 19424)), this protein is Large ribosomal subunit protein uL14.